Reading from the N-terminus, the 175-residue chain is Small ribosomal subunit protein uS7 (175 aa).

This sequence belongs to the universal ribosomal protein uS7 family. Part of the 30S ribosomal subunit. Contacts proteins S9 and S11.

One of the primary rRNA binding proteins, it binds directly to 16S rRNA where it nucleates assembly of the head domain of the 30S subunit. Is located at the subunit interface close to the decoding center, probably blocks exit of the E-site tRNA. This Neorickettsia sennetsu (strain ATCC VR-367 / Miyayama) (Ehrlichia sennetsu) protein is Small ribosomal subunit protein uS7.